The following is a 759-amino-acid chain: 1,4-alpha-glucan branching enzyme GlgB (759 aa).

The active-site Nucleophile is the Asp431. Glu484 serves as the catalytic Proton donor.

It belongs to the glycosyl hydrolase 13 family. GlgB subfamily. In terms of assembly, monomer.

It catalyses the reaction Transfers a segment of a (1-&gt;4)-alpha-D-glucan chain to a primary hydroxy group in a similar glucan chain.. It participates in glycan biosynthesis; glycogen biosynthesis. Catalyzes the formation of the alpha-1,6-glucosidic linkages in glycogen by scission of a 1,4-alpha-linked oligosaccharide from growing alpha-1,4-glucan chains and the subsequent attachment of the oligosaccharide to the alpha-1,6 position. The sequence is that of 1,4-alpha-glucan branching enzyme GlgB from Prochlorococcus marinus (strain MIT 9211).